The chain runs to 420 residues: D-inositol 3-phosphate glycosyltransferase (420 aa).

Residue histidine 13 coordinates 1D-myo-inositol 3-phosphate. UDP-N-acetyl-alpha-D-glucosamine-binding positions include 19 to 20 (QP) and glycine 27. 1D-myo-inositol 3-phosphate is bound by residues 24–29 (DAGGMN), lysine 82, tyrosine 115, threonine 139, and arginine 159. UDP-N-acetyl-alpha-D-glucosamine is bound by residues arginine 233, lysine 238, and valine 294. Mg(2+) contacts are provided by phenylalanine 303, arginine 304, and alanine 306. Glutamate 316 and glutamate 324 together coordinate UDP-N-acetyl-alpha-D-glucosamine. Mg(2+) is bound at residue threonine 330.

This sequence belongs to the glycosyltransferase group 1 family. MshA subfamily. Homodimer.

It catalyses the reaction 1D-myo-inositol 3-phosphate + UDP-N-acetyl-alpha-D-glucosamine = 1D-myo-inositol 2-acetamido-2-deoxy-alpha-D-glucopyranoside 3-phosphate + UDP + H(+). In terms of biological role, catalyzes the transfer of a N-acetyl-glucosamine moiety to 1D-myo-inositol 3-phosphate to produce 1D-myo-inositol 2-acetamido-2-deoxy-glucopyranoside 3-phosphate in the mycothiol biosynthesis pathway. The sequence is that of D-inositol 3-phosphate glycosyltransferase from Pseudarthrobacter chlorophenolicus (strain ATCC 700700 / DSM 12829 / CIP 107037 / JCM 12360 / KCTC 9906 / NCIMB 13794 / A6) (Arthrobacter chlorophenolicus).